A 136-amino-acid polypeptide reads, in one-letter code: MAARRKARKRALEVLFEADQRGLAPLDVLKDKILRADPPVGEYAVTVVEGVVEHQARIDEVLSTYSMAWPLDRMPAVDRALLRIGTWEVLYAADVPDHVAVSEAVEIAQELSTDESPKFVNGLLARIAELKETLSA.

This sequence belongs to the NusB family.

Involved in transcription antitermination. Required for transcription of ribosomal RNA (rRNA) genes. Binds specifically to the boxA antiterminator sequence of the ribosomal RNA (rrn) operons. In Kineococcus radiotolerans (strain ATCC BAA-149 / DSM 14245 / SRS30216), this protein is Transcription antitermination protein NusB.